Consider the following 582-residue polypeptide: ATP-dependent lipid A-core flippase (582 aa).

5 consecutive transmembrane segments (helical) span residues 16–36 (LWPTIAPFKAGLIVAGVALIL), 64–84 (LMWMPLVVIGLMILRGITSYI), 153–173 (IIGLFIMMFYYSWQLSIILIV), 253–273 (PIIQLIASLALAFVLYAASFP), and 275–295 (VMDSLTAGTITVVFSSMIALM). Positions 28–310 (IVAGVALILN…LTNVNAQFQR (283 aa)) constitute an ABC transmembrane type-1 domain. In terms of domain architecture, ABC transporter spans 342–578 (VEFRNVTFTY…RGVYAQLHKM (237 aa)). Residue 376–383 (GRSGSGKS) coordinates ATP.

This sequence belongs to the ABC transporter superfamily. Lipid exporter (TC 3.A.1.106) family. Homodimer.

It is found in the cell inner membrane. The catalysed reaction is ATP + H2O + lipid A-core oligosaccharideSide 1 = ADP + phosphate + lipid A-core oligosaccharideSide 2.. In terms of biological role, involved in lipopolysaccharide (LPS) biosynthesis. Translocates lipid A-core from the inner to the outer leaflet of the inner membrane. Transmembrane domains (TMD) form a pore in the inner membrane and the ATP-binding domain (NBD) is responsible for energy generation. This Escherichia coli O6:K15:H31 (strain 536 / UPEC) protein is ATP-dependent lipid A-core flippase.